The following is a 388-amino-acid chain: Putative [LysW]-aminoadipate semialdehyde/glutamate semialdehyde transaminase (388 aa).

Pyridoxal 5'-phosphate is bound by residues 100–101 and F127; that span reads GT. R130 serves as a coordination point for substrate. 211–214 provides a ligand contact to pyridoxal 5'-phosphate; it reads DEIQ. Position 240 is an N6-(pyridoxal phosphate)lysine (K240). S268 is a binding site for substrate. Position 269 (T269) interacts with pyridoxal 5'-phosphate.

It belongs to the class-III pyridoxal-phosphate-dependent aminotransferase family. LysJ subfamily. As to quaternary structure, homodimer. Requires pyridoxal 5'-phosphate as cofactor.

It is found in the cytoplasm. It catalyses the reaction [amino-group carrier protein]-C-terminal-gamma-(L-lysyl)-L-glutamate + 2-oxoglutarate = [amino-group carrier protein]-C-terminal-N-(1-carboxy-5-oxopentan-1-yl)-L-glutamine + L-glutamate. The catalysed reaction is [amino-group carrier protein]-C-terminal-gamma-(L-ornithyl)-L-glutamate + 2-oxoglutarate = [amino-group carrier protein]-C-terminal-gamma-(L-glutamyl-5-semialdehyde)-L-glutamate + L-glutamate. The protein operates within amino-acid biosynthesis; L-lysine biosynthesis via AAA pathway; L-lysine from L-alpha-aminoadipate (Thermus route): step 4/5. It functions in the pathway amino-acid biosynthesis; L-arginine biosynthesis. In terms of biological role, involved in both the arginine and lysine biosynthetic pathways. This chain is Putative [LysW]-aminoadipate semialdehyde/glutamate semialdehyde transaminase, found in Aeropyrum pernix (strain ATCC 700893 / DSM 11879 / JCM 9820 / NBRC 100138 / K1).